A 247-amino-acid chain; its full sequence is UPF0309 protein lin2794 (247 aa).

Positions 31-214 (VAESIENDGV…EKMVNDNFTP (184 aa)) constitute an SIS domain.

It belongs to the UPF0309 family.

This Listeria innocua serovar 6a (strain ATCC BAA-680 / CLIP 11262) protein is UPF0309 protein lin2794.